The primary structure comprises 461 residues: Cysteine--tRNA ligase (461 aa).

Cysteine 28 lines the Zn(2+) pocket. The 'HIGH' region motif lies at isoleucine 30–histidine 40. 3 residues coordinate Zn(2+): cysteine 209, histidine 234, and glutamate 238. The short motif at lysine 266–serine 270 is the 'KMSKS' region element. Lysine 269 serves as a coordination point for ATP.

This sequence belongs to the class-I aminoacyl-tRNA synthetase family. Monomer. The cofactor is Zn(2+).

It is found in the cytoplasm. It catalyses the reaction tRNA(Cys) + L-cysteine + ATP = L-cysteinyl-tRNA(Cys) + AMP + diphosphate. This Escherichia coli O127:H6 (strain E2348/69 / EPEC) protein is Cysteine--tRNA ligase.